The primary structure comprises 702 residues: Acetylcholinesterase (702 aa).

The signal sequence occupies residues 1–36 (MEIRGLITRLLGPCHLRHLILCSLGLYSILVQSVHC). The segment at 107-134 (HIHSTTTRRRGLTRRESSSDATDSDPLV) is disordered. The N-linked (GlcNAc...) asparagine glycan is linked to N187. C195 and C222 are disulfide-bonded. Residue S327 is the Acyl-ester intermediate of the active site. C381 and C394 form a disulfide bridge. Residues E453 and H567 each act as charge relay system in the active site. A disulfide bond links C529 and C650. N-linked (GlcNAc...) asparagine glycosylation occurs at N637.

This sequence belongs to the type-B carboxylesterase/lipase family.

Its subcellular location is the synapse. The protein localises to the secreted. The protein resides in the cell membrane. It carries out the reaction acetylcholine + H2O = choline + acetate + H(+). Its function is as follows. Rapidly hydrolyzes choline released into the synapse. This is Acetylcholinesterase (ACHE1) from Culex pipiens (House mosquito).